Consider the following 278-residue polypeptide: 4-deoxy-L-threo-5-hexosulose-uronate ketol-isomerase (278 aa).

Zn(2+) contacts are provided by His-196, His-198, Glu-203, and His-245.

It belongs to the KduI family. Requires Zn(2+) as cofactor.

It carries out the reaction 5-dehydro-4-deoxy-D-glucuronate = 3-deoxy-D-glycero-2,5-hexodiulosonate. The protein operates within glycan metabolism; pectin degradation; 2-dehydro-3-deoxy-D-gluconate from pectin: step 4/5. Catalyzes the isomerization of 5-dehydro-4-deoxy-D-glucuronate to 3-deoxy-D-glycero-2,5-hexodiulosonate. In Salmonella dublin (strain CT_02021853), this protein is 4-deoxy-L-threo-5-hexosulose-uronate ketol-isomerase.